We begin with the raw amino-acid sequence, 609 residues long: MTLEATAIEATAIEATGIEATGITATAIEPTPRRSPGSSWLLCGGCGTMLYERRFAREGRVCADCSWHAPMTIQQRLDLLLDADSARPVDVPAIDGDPLEFTDTRPYRDRLRDARASTGLDEAAACVRGTIDGNPVVVVVMDFRFLGGSLGATVGEVFTRGAELALRERTPLLTVTASGGARMQEGAIALMQMAKTSQALGQLDEAGILTVSLITDPTFGGVAASFATLADVIIAEPGARLGFAGRRVIEQTIRQTLPEDFQTAEFLLTHGVVDLISPRRELRANLARLLSVSSRRADGIPRQAGRPDRAVVTDPEQLARRDAWESVRAARRLGRPTTLDYAAMILEDFTELRGDRMSADCPALVAGLGRLDGVPVAVLGTQKGHTADELRYRNFGMPTPAGYRKSARVMRLAAKLGLPVITLIDTAGAYPGVEAEEQAQAVAIAENLRLMAGLPVPVVAVVTGEGGSGGALALAFADRVLMCANAVYSVISAEGCAAILWKNPAAAPTAAAALRVDARELLRLGVVDGVIPEPDGGADADPAGTAARLREALRGALADLLPLDQMNLVTRRRARFRQFGVATPAPATAPAASDDAHESQTDRSVEATR.

Positions 1 to 271 (MTLEATAIEA…QTAEFLLTHG (271 aa)) are acetyl-coenzyme A carboxylase carboxyl transferase subunit beta. The CoA carboxyltransferase N-terminal domain maps to 39–308 (SWLLCGGCGT…GIPRQAGRPD (270 aa)). The carboxyltransferase stretch occupies residues 39–559 (SWLLCGGCGT…REALRGALAD (521 aa)). The Zn(2+) site is built by cysteine 43, cysteine 46, cysteine 62, and cysteine 65. A C4-type zinc finger spans residues 43 to 65 (CGGCGTMLYERRFAREGRVCADC). Residues 272-582 (VVDLISPRRE…RARFRQFGVA (311 aa)) form an acetyl-coenzyme A carboxylase carboxyl transferase subunit alpha region. The CoA carboxyltransferase C-terminal domain occupies 314–559 (DPEQLARRDA…REALRGALAD (246 aa)). Residues 582 to 592 (ATPAPATAPAA) are compositionally biased toward low complexity. The segment at 582-609 (ATPAPATAPAASDDAHESQTDRSVEATR) is disordered. Over residues 594-609 (DDAHESQTDRSVEATR) the composition is skewed to basic and acidic residues.

The protein in the N-terminal section; belongs to the AccD/PCCB family. It in the C-terminal section; belongs to the AccA family. As to quaternary structure, acetyl-CoA carboxylase is a heterotetramer composed of biotin carboxyl carrier protein (AccB), biotin carboxylase (AccC) and two subunits of ACCase subunit beta/alpha. Zn(2+) is required as a cofactor.

It localises to the cytoplasm. It carries out the reaction N(6)-carboxybiotinyl-L-lysyl-[protein] + acetyl-CoA = N(6)-biotinyl-L-lysyl-[protein] + malonyl-CoA. The protein operates within lipid metabolism; malonyl-CoA biosynthesis; malonyl-CoA from acetyl-CoA: step 1/1. In terms of biological role, component of the acetyl coenzyme A carboxylase (ACC) complex. Biotin carboxylase (BC) catalyzes the carboxylation of biotin on its carrier protein (BCCP) and then the CO(2) group is transferred by the transcarboxylase to acetyl-CoA to form malonyl-CoA. The protein is Acetyl-coenzyme A carboxylase carboxyl transferase subunits beta/alpha (accD) of Frankia alni (strain DSM 45986 / CECT 9034 / ACN14a).